The following is a 401-amino-acid chain: Chromatin modification-related protein EAF3 (401 aa).

In terms of domain architecture, Tudor-knot spans 13 to 98 (RCLAFHGPLM…DEWVGYDRIR (86 aa)). Over residues 39–53 (TSIPNDKPGGSSQAT) the composition is skewed to polar residues. Disordered regions lie at residues 39 to 65 (TSIP…GEDE) and 117 to 210 (EAKK…NMLH). 2 stretches are compositionally biased toward basic and acidic residues: residues 54 to 63 (KEIKPQKLGE) and 117 to 126 (EAKKSLLEQQ). Over residues 153–190 (SISKSTSQSFLTSSVSGRKSGRSSANSLHPGSSLRSSS) the composition is skewed to low complexity. At Ser201 the chain carries Phosphoserine. The 184-residue stretch at 216 to 399 (PTPKISLQIP…TSSQYEGVAL (184 aa)) folds into the MRG domain.

The protein belongs to the MRG family. As to quaternary structure, component of the NuA4 histone acetyltransferase complex composed of at least ACT1, ARP4, YAF9, VID21, SWC4, EAF3, EAF5, EAF6, EAF7, EPL1, ESA1, TRA1 and YNG2.

It is found in the nucleus. In terms of biological role, component of the NuA4 histone acetyltransferase complex which is involved in transcriptional activation of selected genes principally by acetylation of nucleosomal histone H4 and H2A. The NuA4 complex is also involved in DNA repair. The polypeptide is Chromatin modification-related protein EAF3 (EAF3) (Saccharomyces cerevisiae (strain ATCC 204508 / S288c) (Baker's yeast)).